We begin with the raw amino-acid sequence, 352 residues long: MSKQPSLSYKDAGVDIDAGEALVERIKGVAKRTARPEVMGGLGGFGALCEIPAGYKQPVLVSGTDGVGTKLRLALNLNKHDSIGQDLVAMCVNDLVVCGAEPLFFLDYYATGKLNVDVAATVVTGIGAGCELAGCSLVGGETAEMPGMYEGEDYDLAGFCVGVVEKAEIIDGSKVATGDALIALPSSGPHSNGYSLIRKILEVSATDIENTQLDGKPLTDLLMAPTRIYVKPLLQLIKQTGAVKAMAHITGGGLLDNIPRVLPKNAQAVVDVASWQRPAVFDFLQEKGNVDEHEMHRVLNCGVGMVICVAQDQVEAALNVLRAEGEQPWVIGRIEQAAEGAAQVELQNLKAH.

The protein belongs to the AIR synthase family.

The protein localises to the cytoplasm. The enzyme catalyses 2-formamido-N(1)-(5-O-phospho-beta-D-ribosyl)acetamidine + ATP = 5-amino-1-(5-phospho-beta-D-ribosyl)imidazole + ADP + phosphate + H(+). It participates in purine metabolism; IMP biosynthesis via de novo pathway; 5-amino-1-(5-phospho-D-ribosyl)imidazole from N(2)-formyl-N(1)-(5-phospho-D-ribosyl)glycinamide: step 2/2. The polypeptide is Phosphoribosylformylglycinamidine cyclo-ligase (Pseudomonas putida (strain W619)).